The following is a 302-amino-acid chain: 4-diphosphocytidyl-2-C-methyl-D-erythritol kinase (302 aa).

Residue lysine 27 is part of the active site. Position 110–120 (110–120) interacts with ATP; it reads PMGGGVGGGSS. Residue aspartate 152 is part of the active site.

It belongs to the GHMP kinase family. IspE subfamily.

The enzyme catalyses 4-CDP-2-C-methyl-D-erythritol + ATP = 4-CDP-2-C-methyl-D-erythritol 2-phosphate + ADP + H(+). The protein operates within isoprenoid biosynthesis; isopentenyl diphosphate biosynthesis via DXP pathway; isopentenyl diphosphate from 1-deoxy-D-xylulose 5-phosphate: step 3/6. In terms of biological role, catalyzes the phosphorylation of the position 2 hydroxy group of 4-diphosphocytidyl-2C-methyl-D-erythritol. The sequence is that of 4-diphosphocytidyl-2-C-methyl-D-erythritol kinase from Mannheimia succiniciproducens (strain KCTC 0769BP / MBEL55E).